Consider the following 96-residue polypeptide: Co-chaperonin GroES (96 aa).

This sequence belongs to the GroES chaperonin family. Heptamer of 7 subunits arranged in a ring. Interacts with the chaperonin GroEL.

The protein localises to the cytoplasm. Functionally, together with the chaperonin GroEL, plays an essential role in assisting protein folding. The GroEL-GroES system forms a nano-cage that allows encapsulation of the non-native substrate proteins and provides a physical environment optimized to promote and accelerate protein folding. GroES binds to the apical surface of the GroEL ring, thereby capping the opening of the GroEL channel. This is Co-chaperonin GroES from Methylobacterium radiotolerans (strain ATCC 27329 / DSM 1819 / JCM 2831 / NBRC 15690 / NCIMB 10815 / 0-1).